Reading from the N-terminus, the 563-residue chain is uncharacterized protein (563 aa).

Residues 1–13 (MASRSCICQVSAG) lie on the Cytoplasmic side of the membrane. Residues 14–34 (IIFLIGAALLVAGLVIVLNVF) form a helical membrane-spanning segment. Over 35–528 (PNIVNNQIND…LFTPVSTVNT (494 aa)) the chain is Lumenal. Residues Asn-43, Asn-112, Asn-133, Asn-188, Asn-265, Asn-295, Asn-315, and Asn-502 are each glycosylated (N-linked (GlcNAc...) asparagine). The chain crosses the membrane as a helical span at residues 529 to 549 (ICWIAVGLGAGLIALSIVMVI). The Cytoplasmic segment spans residues 550–563 (VSFCCFRDEHHKTS).

Belongs to the CD36 family.

The protein resides in the membrane. This is an uncharacterized protein from Caenorhabditis elegans.